Consider the following 950-residue polypeptide: Voltage-gated inwardly rectifying potassium channel KCNH6 (950 aa).

The Cytoplasmic portion of the chain corresponds to 1 to 261; that stretch reads MPVRRGHVAP…YSPFKAVWDW (261 aa). The region spanning 41-70 is the PAS domain; the sequence is IIYCNDGFCELFGYSRVEVMQRPCTCDFLT. In terms of domain architecture, PAC spans 92–144; the sequence is CKVDILYYRKDASSFRCLVDVVPVKNEDGAVIMFILNFEDLAQLLAKSSSRSL. Residues 154-174 are disordered; sequence LGSEGSHSRPSGQGPGPGRGK. Residues 262–282 form a helical membrane-spanning segment; it reads LILLLVIYTAVFTPYSAAFLL. The Extracellular segment spans residues 283–298; it reads SDQDESQRGTCGYTCS. A helical membrane pass occupies residues 299 to 319; it reads PLTVVDLIVDIMFVVDIVINF. Over 320–340 the chain is Cytoplasmic; it reads RTTYVNTNDEVVSHPRRIAVH. A helical membrane pass occupies residues 341–361; it reads YFKGWFLIDMVAAIPFDLLIF. Over 362 to 370 the chain is Extracellular; the sequence is RTGSDETTT. The chain crosses the membrane as a helical; Voltage-sensor span at residues 371 to 391; that stretch reads LIGLLKTARLLRLVRVARKLD. Residues 392-398 are Cytoplasmic-facing; sequence RYSEYGA. A helical transmembrane segment spans residues 399–419; the sequence is AVLFLLMCTFALIAHWLACIW. Over 420–463 the chain is Extracellular; it reads YAIGNVERPYLEPKIGWLDSLGAQLGKQYNGSDPASGPSVQDKY. Positions 464–484 form an intramembrane region, pore-forming; sequence VTALYFTFSSLTSVGFGNVSP. Residues 476–481 carry the Selectivity filter motif; sequence SVGFGN. Residues 485-490 lie on the Extracellular side of the membrane; the sequence is NTNSEK. The chain crosses the membrane as a helical span at residues 491–511; it reads VFSICVMLIGSLMYASIFGNV. The Cytoplasmic segment spans residues 512–950; the sequence is SAIIQRLYSG…HGSDPGFTRS (439 aa). A cNMP-binding domain region spans residues 594-694; sequence AFRGASKGCL…IHRADLLEVL (101 aa). Disordered regions lie at residues 719 to 750 and 890 to 950; these read GGLQ…APSL and VPSS…FTRS. Residues 740–750 are compositionally biased toward polar residues; the sequence is NDSQSGAAPSL. Over residues 898–912 the composition is skewed to low complexity; that stretch reads PGGLLSPLASPLRPL.

This sequence belongs to the potassium channel family. H (Eag) (TC 1.A.1.20) subfamily. Kv11.2/KCNH6 sub-subfamily. The potassium channel is probably composed of a homo- or heterotetrameric complex of pore-forming alpha subunits that can associate only within their subfamily. As to expression, highly expressed in celiac and superior mesenteric ganglia, but not detected in brain or in heart. Detected at low levels in retina. Also found in pituitary. Also found in the olfactory bulb (granular and mitral cell layers).

It is found in the cell membrane. The catalysed reaction is K(+)(in) = K(+)(out). Its function is as follows. Pore-forming (alpha) subunit of voltage-gated inwardly rectifying potassium channel. Characterized by unusual gating kinetics by producing relatively small outward currents during membrane depolarization and large inward currents during subsequent repolarization which reflect a rapid inactivation during depolarization and quick recovery from inactivation but slow deactivation (closing) during repolarization. Activates even more slowly than KCNH2. This Rattus norvegicus (Rat) protein is Voltage-gated inwardly rectifying potassium channel KCNH6.